The following is an 878-amino-acid chain: Alanine--tRNA ligase (878 aa).

Zn(2+) contacts are provided by His-567, His-571, Cys-668, and His-672.

Belongs to the class-II aminoacyl-tRNA synthetase family. Zn(2+) serves as cofactor.

It localises to the cytoplasm. The enzyme catalyses tRNA(Ala) + L-alanine + ATP = L-alanyl-tRNA(Ala) + AMP + diphosphate. In terms of biological role, catalyzes the attachment of alanine to tRNA(Ala) in a two-step reaction: alanine is first activated by ATP to form Ala-AMP and then transferred to the acceptor end of tRNA(Ala). Also edits incorrectly charged Ser-tRNA(Ala) and Gly-tRNA(Ala) via its editing domain. The sequence is that of Alanine--tRNA ligase from Magnetococcus marinus (strain ATCC BAA-1437 / JCM 17883 / MC-1).